Reading from the N-terminus, the 528-residue chain is Poly(A) RNA polymerase GLD2 (528 aa).

Disordered stretches follow at residues Met1–Gln41 and Arg99–Ser121. Low complexity-rich tracts occupy residues Pro16 to Leu32 and Ser102 to Ser113. Residues Asp259 and Asp261 each contribute to the Mg(2+) site. The region spanning Leu428–Asn481 is the PAP-associated domain.

Belongs to the DNA polymerase type-B-like family. GLD2 subfamily. Component of a complex at least composed of cpeb1, cpsf1, tent2/gld2, pabpc1/ePAB, parn and sympk. Following oocyte maturation, parn is expelled from the complex. Interacts with rbm9 and sympk. It depends on Mg(2+) as a cofactor. Requires Mn(2+) as cofactor.

The protein resides in the cytoplasm. It catalyses the reaction RNA(n) + ATP = RNA(n)-3'-adenine ribonucleotide + diphosphate. Cytoplasmic poly(A) RNA polymerase that adds successive AMP monomers to the 3'-end of specific RNAs, forming a poly(A) tail. In contrast to the canonical nuclear poly(A) RNA polymerase, it only adds poly(A) to selected cytoplasmic mRNAs during oocyte maturation. Plays a central role during oocyte maturation by mediating polyadenylation of dormant mRNAs, which contain 5'AAUAAA-3' sequence in their 3'-UTR. In immature oocytes, polyadenylation of poly(A) tails is counteracted by the ribonuclease parn. During maturation parn is excluded from the ribonucleoprotein complex, allowing poly(A) elongation and activation of mRNAs. May not play a role in replication-dependent histone mRNA degradation. The polypeptide is Poly(A) RNA polymerase GLD2 (tent2) (Xenopus tropicalis (Western clawed frog)).